We begin with the raw amino-acid sequence, 217 residues long: MGLELGFRELGEVPYEPTWHAMQRFVAERDKSVMDEAWLLQHPAVFTQGQAGKAEHVLFPGDIPVIQVDRGGQVTYHGPGQLVTYLLLDVRRLGLGVRELVSRIEQSLIGLLASYDVQAVAKPDAPGVYVDGAKIASLGLRIRNGCSFHGLALNLDMDLRPFQRINPCGYAGMPMTQLRDLVGPVDFAEVCTRLRAELVSRLGYAEQKTLTGGIELT.

Positions lysine 31–glutamate 206 constitute a BPL/LPL catalytic domain. Substrate is bound by residues arginine 70–histidine 77, serine 137–glycine 139, and glycine 150–alanine 152. Cysteine 168 (acyl-thioester intermediate) is an active-site residue.

This sequence belongs to the LipB family.

It is found in the cytoplasm. It catalyses the reaction octanoyl-[ACP] + L-lysyl-[protein] = N(6)-octanoyl-L-lysyl-[protein] + holo-[ACP] + H(+). The protein operates within protein modification; protein lipoylation via endogenous pathway; protein N(6)-(lipoyl)lysine from octanoyl-[acyl-carrier-protein]: step 1/2. Functionally, catalyzes the transfer of endogenously produced octanoic acid from octanoyl-acyl-carrier-protein onto the lipoyl domains of lipoate-dependent enzymes. Lipoyl-ACP can also act as a substrate although octanoyl-ACP is likely to be the physiological substrate. The polypeptide is Octanoyltransferase (Pseudomonas aeruginosa (strain UCBPP-PA14)).